Reading from the N-terminus, the 321-residue chain is MSENNEIEMELPFDSSAITSTEVLDRVNALLTLQDTQNELTEQMEKEILEIEKKYLKKFQPLAEKRFEIVSGKVEPTKEDQQCKAPIQVENLKSVPTDKGIPKFWLHVLQNTEVKDIIEECDIEALEYLVDIKIVQVGDAQDYSLDFHFSENPFFTNTVISKTVKLEEDNELNEIVSTPINWKDGKNFTVQSKKKTVKSKPTKGKAATTTSTTVQEVVPCFFSTFVSPNQDPTSDEEADEIMYIQYQIIAKLKDIVIPEAVNFFLGRASDAEENDYDFGEDFEDEEGEDDDEEDDEEEQTIKKPSGKGKAQPQQPQDCKQQ.

A compositionally biased stretch (acidic residues) spans 272–298 (EENDYDFGEDFEDEEGEDDDEEDDEEE). A disordered region spans residues 272–321 (EENDYDFGEDFEDEEGEDDDEEDDEEEQTIKKPSGKGKAQPQQPQDCKQQ). Residues 311-321 (QPQQPQDCKQQ) show a composition bias toward low complexity.

The protein belongs to the nucleosome assembly protein (NAP) family.

The protein localises to the nucleus. Its function is as follows. May modulate chromatin structure by regulation of histone octamer formation. The chain is Probable nucleosome assembly protein (nap1) from Dictyostelium discoideum (Social amoeba).